The following is a 297-amino-acid chain: MNLEGTHVAMITPFNNDNTINEEKYREFIDFLIEGGVDGILAAGTTGESATLTLEEHQKVIDIMVDQANGRVTTIAGAGSNATSEALDLVNYSKDAGADVALVITPYYNKPQQSGLYNHFKLLNDQCDMPIIAYNVPSRTGVDLSVDNIINLAKLDNIVAIKEANPDLNKLAHVFSRLNSENLLDDFTVLSGNDSLTLPMISQGSKGVISVVANIMPNKTSTMVNNALNGNYDEARTLSNELFNLMDVLFIEASPAPTKRALNLMGMDVGGLRMPINEICDENEVILKEILKENNLI.

Thr46 provides a ligand contact to pyruvate. Tyr134 functions as the Proton donor/acceptor in the catalytic mechanism. The Schiff-base intermediate with substrate role is filled by Lys162. Ile209 contributes to the pyruvate binding site.

Belongs to the DapA family. As to quaternary structure, homotetramer; dimer of dimers.

Its subcellular location is the cytoplasm. It catalyses the reaction L-aspartate 4-semialdehyde + pyruvate = (2S,4S)-4-hydroxy-2,3,4,5-tetrahydrodipicolinate + H2O + H(+). It participates in amino-acid biosynthesis; L-lysine biosynthesis via DAP pathway; (S)-tetrahydrodipicolinate from L-aspartate: step 3/4. Catalyzes the condensation of (S)-aspartate-beta-semialdehyde [(S)-ASA] and pyruvate to 4-hydroxy-tetrahydrodipicolinate (HTPA). The chain is 4-hydroxy-tetrahydrodipicolinate synthase from Methanosphaera stadtmanae (strain ATCC 43021 / DSM 3091 / JCM 11832 / MCB-3).